Here is a 490-residue protein sequence, read N- to C-terminus: Ribulose bisphosphate carboxylase large chain (490 aa).

Substrate contacts are provided by N127 and T177. K179 functions as the Proton acceptor in the catalytic mechanism. K181 provides a ligand contact to substrate. Positions 205, 207, and 208 each coordinate Mg(2+). Position 205 is an N6-carboxylysine (K205). The Proton acceptor role is filled by H297. Substrate is bound by residues R298, H330, and S382.

It belongs to the RuBisCO large chain family. Type I subfamily. As to quaternary structure, heterohexadecamer of 8 large chains and 8 small chains. Mg(2+) serves as cofactor.

The protein localises to the plastid. Its subcellular location is the chloroplast. It catalyses the reaction 2 (2R)-3-phosphoglycerate + 2 H(+) = D-ribulose 1,5-bisphosphate + CO2 + H2O. The enzyme catalyses D-ribulose 1,5-bisphosphate + O2 = 2-phosphoglycolate + (2R)-3-phosphoglycerate + 2 H(+). RuBisCO catalyzes two reactions: the carboxylation of D-ribulose 1,5-bisphosphate, the primary event in carbon dioxide fixation, as well as the oxidative fragmentation of the pentose substrate in the photorespiration process. Both reactions occur simultaneously and in competition at the same active site. The sequence is that of Ribulose bisphosphate carboxylase large chain from Thalassiosira nordenskioeldii (Marine diatom).